The sequence spans 222 residues: Large ribosomal subunit protein uL1 (222 aa).

This sequence belongs to the universal ribosomal protein uL1 family. As to quaternary structure, part of the 50S ribosomal subunit.

In terms of biological role, binds directly to 23S rRNA. Probably involved in E site tRNA release. Its function is as follows. Protein L1 is also a translational repressor protein, it controls the translation of its operon by binding to its mRNA. This Pyrobaculum islandicum (strain DSM 4184 / JCM 9189 / GEO3) protein is Large ribosomal subunit protein uL1.